Consider the following 422-residue polypeptide: Interleukin-11 receptor subunit alpha (422 aa).

An N-terminal signal peptide occupies residues 1–22 (MSSSCSGLSRVLVAVATALVSA). Topologically, residues 24–370 (SPCPQAWGPP…DSVEQVAVLA (347 aa)) are extracellular. The 84-residue stretch at 27–110 (PQAWGPPGVQ…LGGTVTLQLG (84 aa)) folds into the Ig-like C2-type domain. 3 cysteine pairs are disulfide-bonded: Cys48/Cys94, Cys120/Cys130, and Cys170/Cys180. 2 Fibronectin type-III domains span residues 112-219 (PPAR…LRPD) and 220-317 (PPQG…TPST). Asn127 carries N-linked (GlcNAc...) asparagine glycosylation. N-linked (GlcNAc...) asparagine glycosylation is present at Asn194. Residues 304 to 308 (WSTWS) carry the WSXWS motif motif. The segment at 335–355 (EVEPQVDSPAPPRPSLQPHPR) is disordered. A helical transmembrane segment spans residues 371–391 (SLGILSFLGLVAGALALGLWL). At 392 to 422 (RLRRGGKDGSPKPGFLASVIPVDRRPGAPNL) the chain is on the cytoplasmic side. Residues 398–422 (KDGSPKPGFLASVIPVDRRPGAPNL) form a disordered region. Over residues 413–422 (VDRRPGAPNL) the composition is skewed to basic and acidic residues.

This sequence belongs to the type I cytokine receptor family. Type 3 subfamily. On IL11 binding, forms a multimer complex with IL6ST/gp130. Post-translationally, a short soluble form is also released from the membrane by proteolysis. The sIL11RA is formed either by limited proteolysis of membrane-bound receptors, a process referred to as ectodomain shedding, or directly secreted from the cells after alternative mRNA splicing. mIL11RA is cleaved by the proteases ADAM10, ELANE and PRTN3. Expressed in a number of cell lines, including the myelogenous leukemia cell line K-562, the megakaryocytic leukemia cell line M-07e, the erythroleukemia cell line TF-1, and the osteosarcoma cell lines, MG-63 and SaOS-2. Also expressed in normal and malignant prostate epithelial cell lines. Expression levels are increased in prostate carcinoma.

Its subcellular location is the membrane. The protein localises to the secreted. Receptor for interleukin-11 (IL11). The receptor systems for IL6, LIF, OSM, CNTF, IL11 and CT1 can utilize IL6ST for initiating signal transmission. The IL11/IL11RA/IL6ST complex may be involved in the control of proliferation and/or differentiation of skeletogenic progenitor or other mesenchymal cells. Essential for the normal development of craniofacial bones and teeth. Restricts suture fusion and tooth number. In terms of biological role, soluble form of IL11 receptor (sIL11RA) that acts as an agonist of IL11 activity. The IL11:sIL11RA complex binds to IL6ST/gp130 on cell surfaces and induces signaling also on cells that do not express membrane-bound IL11RA in a process called IL11 trans-signaling. The chain is Interleukin-11 receptor subunit alpha from Homo sapiens (Human).